Consider the following 286-residue polypeptide: Phosphoribosylaminoimidazole-succinocarboxamide synthase (286 aa).

Belongs to the SAICAR synthetase family.

The catalysed reaction is 5-amino-1-(5-phospho-D-ribosyl)imidazole-4-carboxylate + L-aspartate + ATP = (2S)-2-[5-amino-1-(5-phospho-beta-D-ribosyl)imidazole-4-carboxamido]succinate + ADP + phosphate + 2 H(+). Its pathway is purine metabolism; IMP biosynthesis via de novo pathway; 5-amino-1-(5-phospho-D-ribosyl)imidazole-4-carboxamide from 5-amino-1-(5-phospho-D-ribosyl)imidazole-4-carboxylate: step 1/2. This chain is Phosphoribosylaminoimidazole-succinocarboxamide synthase, found in Mannheimia succiniciproducens (strain KCTC 0769BP / MBEL55E).